A 91-amino-acid chain; its full sequence is Small ribosomal subunit protein bS20 (91 aa).

The interval 1 to 25 (MANTKSAEKRHRQSLKRRARNVTVR) is disordered. A compositionally biased stretch (basic residues) spans 8–20 (EKRHRQSLKRRAR).

This sequence belongs to the bacterial ribosomal protein bS20 family.

Its function is as follows. Binds directly to 16S ribosomal RNA. This chain is Small ribosomal subunit protein bS20, found in Myxococcus xanthus (strain DK1622).